Here is a 161-residue protein sequence, read N- to C-terminus: Multiprotein-bridging factor 1 (161 aa).

Residues methionine 1–leucine 66 form a disordered region. Gly residues predominate over residues arginine 14–proline 23. Composition is skewed to polar residues over residues threonine 27–alanine 36 and threonine 52–phenylalanine 65. The HTH cro/C1-type domain maps to methionine 90–valine 144. Residues arginine 101 to lysine 120 constitute a DNA-binding region (H-T-H motif).

The protein belongs to the MBF1 family.

In terms of biological role, transcriptional coactivator that stimulates GCN4-dependent transcriptional activity by bridging the DNA-binding region of GCN4 and TBP (SPT15), thereby recruiting TBP to GCN4-bound promoters. Involved in induction of the ribosome quality control (RQC) pathway; a pathway that degrades nascent peptide chains during problematic translation. Required to prevent stalled ribosomes from frameshifting. This Pyricularia oryzae (strain 70-15 / ATCC MYA-4617 / FGSC 8958) (Rice blast fungus) protein is Multiprotein-bridging factor 1 (MBF1).